The following is a 381-amino-acid chain: uncharacterized protein (381 aa).

The N-terminal stretch at 1 to 16 (MQTLLFYFFFINLIFA) is a signal peptide. The Lumenal portion of the chain corresponds to 17–303 (HDLNVKTYKP…KILENSPCPN (287 aa)). Cys118 and Cys149 are joined by a disulfide. N-linked (GlcNAc...) asparagine glycans are attached at residues Asn133, Asn192, Asn225, Asn243, Asn246, and Asn287. A helical membrane pass occupies residues 304–324 (QPSIQPFGILMMLVSTIYGNF). Residues 325–359 (KNLYNCIKRNTIGYIYNSIYDFWITEGMLFPMRNM) lie on the Cytoplasmic side of the membrane. A helical transmembrane segment spans residues 360 to 380 (DIFKITAISIGLSIPVFLWLL). A topological domain (lumenal) is located at residue Lys381.

Belongs to the calreticulin family.

The protein resides in the endoplasmic reticulum membrane. This is an uncharacterized protein from Schizosaccharomyces pombe (strain 972 / ATCC 24843) (Fission yeast).